A 780-amino-acid chain; its full sequence is Cullin-5 (780 aa).

Position 34 is a phosphoserine (S34). Phosphothreonine is present on T210. The Cullin neddylation domain occupies 711–772 (RILRTQEAII…HKYIRRDESD (62 aa)). Residue K724 forms a Glycyl lysine isopeptide (Lys-Gly) (interchain with G-Cter in NEDD8) linkage.

The protein belongs to the cullin family. As to quaternary structure, component of multiple cullin-5-RING E3 ubiquitin-protein ligase complexes (ECS complexes, also named CRL5 complexes) formed of CUL5, Elongin BC (ELOB and ELOC), RNF7/RBX2 and a variable SOCS box domain-containing protein as substrate-specific recognition component. CUL5-containing ECS complexes specifically contain RNF7/RBX2, and not RBX1, as catalytic subunit. Component of the ECS(ASB2) complex with the substrate recognition component ASB2. Component of the ECS(ASB6) complex with the substrate recognition component ASB6. Component of the ECS(ASB7) complex with the substrate recognition component ASB7. Component of the ECS(ASB9) complex with the substrate recognition component ASB9. Component of the ECS(ASB11) complex with the substrate recognition component ASB11. Component of the ECS(ASB12) complex with the substrate recognition component ASB12. Component of the ECS(LRRC41) complex with the substrate recognition component LRRC41. Component of the ECS(SOCS1) complex with the substrate recognition component SOCS1. Component of the ECS(SOCS2) complex with the substrate recognition component SOCS2. Component of the ECS(WSB1) complex with the substrate recognition subunit WSB1. Component of the ECS(SOCS3) complex with the substrate recognition component SOCS3. Component of the ECS(SOCS7) complex with the substrate recognition component SOCS7. Component of the ECS(SPSB1) complex with the substrate recognition component SPSB1. Component of the ECS(SPSB3) complex with the substrate recognition component SPSB3. Component of the ECS(SPSB2) complex with the substrate recognition component SPSB2. Component of the ECS(SPSB4) complex with the substrate recognition component SPSB4. Component of the ECS(RAB40) complex with the substrate recognition subunit RAB40A, RAB40B or RAB40C. Component of the ECS(KLHDC1) complex with the substrate recognition component KLHDC1. Component of the ECS(PCMTD1) complex with the substrate recognition subunit PCMTD1. May also form complexes containing RBX1 and ELOA or VHL; additional evidence is however required to confirm this result in vivo. Interacts (when neddylated) with ARIH2; leading to activate the E3 ligase activity of ARIH2. Interacts with ERCC6; the interaction is induced by DNA damaging agents or inhibitors of RNA polymerase II elongation. Interacts with ELOA (via the BC-box). Interacts (unneddylated form) with DCUN1D1, DCUN1D2, DCUN1D3, DCUN1D4 and DCUN1D5; these interactions promote the cullin neddylation. Neddylated; which enhances the ubiquitination activity of ECS complexes and prevents binding of the inhibitor CAND1. Deneddylated via its interaction with the COP9 signalosome (CSN).

The protein resides in the nucleus. It participates in protein modification; protein ubiquitination. In terms of biological role, core component of multiple cullin-5-RING E3 ubiquitin-protein ligase complexes (ECS complexes, also named CRL5 complexes), which mediate the ubiquitination and subsequent proteasomal degradation of target proteins. Acts a scaffold protein that contributes to catalysis through positioning of the substrate and the ubiquitin-conjugating enzyme. The functional specificity of the E3 ubiquitin-protein ligase complex depends on the variable SOCS box-containing substrate recognition component. Acts as a key regulator of neuron positioning during cortex development: component of various SOCS-containing ECS complexes, such as the ECS(SOCS7) complex, that regulate reelin signaling by mediating ubiquitination and degradation of DAB1. ECS(SOCS1) seems to direct ubiquitination of JAK2. The ECS(SOCS2) complex mediates the ubiquitination and subsequent proteasomal degradation of phosphorylated EPOR and GHR. The ECS(SPSB3) complex catalyzes ubiquitination of nuclear CGAS. ECS(KLHDC1) complex is part of the DesCEND (destruction via C-end degrons) pathway and mediates ubiquitination and degradation of truncated SELENOS selenoprotein produced by failed UGA/Sec decoding, which ends with a glycine. The ECS(ASB9) complex mediates ubiquitination and degradation of CKB. As part of some ECS complex, promotes 'Lys-11'-linked ubiquitination and degradation of BTRC. As part of a multisubunit ECS complex, polyubiquitinates monoubiquitinated POLR2A. As part of the ECS(RAB40C) complex, mediates ANKRD28 ubiquitination and degradation, thereby regulating protein phosphatase 6 (PP6) complex activity and focal adhesion assembly during cell migration. As part of the ECS(RAB40A) complex, mediates RHOU 'Lys-48'-linked ubiquitination and degradation, thus inhibiting focal adhesion disassembly during cell migration. As part of the ECS(RAB40B) complex, mediates LIMA1/EPLIN and RAP2 ubiquitination, thereby regulating actin cytoskeleton dynamics and stress fiber formation during cell migration. May form a cell surface vasopressin receptor. This Pongo abelii (Sumatran orangutan) protein is Cullin-5.